Consider the following 181-residue polypeptide: MRQRGFTLLEIMLVVLLAGVAATLVMMAIPAPKQQDSGWQIARFKAQLQYAVEDSQMNDHILGIYIQPHRWQYALLQRQVVENSPEEQQRLRYVWIPWQPYRMSVPSELPDSFHIELSTQVGAAGDGTGFSPGNGDPHVLILPGGEVTPFRLTLRNGNDSAWLQVDTNGQVHTSPEAEQKG.

Positions 1–5 are cleaved as a propeptide — leader sequence; that stretch reads MRQRG. Residue phenylalanine 6 is modified to N-methylphenylalanine. The helical transmembrane segment at 6–29 threads the bilayer; that stretch reads FTLLEIMLVVLLAGVAATLVMMAI.

The protein belongs to the GSP H family. As to quaternary structure, type II secretion is composed of four main components: the outer membrane complex, the inner membrane complex, the cytoplasmic secretion ATPase and the periplasm-spanning pseudopilus. Interacts with core component OutG. Post-translationally, cleaved by prepilin peptidase. In terms of processing, methylated by prepilin peptidase at the amino group of the N-terminal phenylalanine once the leader sequence is cleaved by prepilin peptidase.

It is found in the cell inner membrane. Functionally, component of the type II secretion system required for the energy-dependent secretion of extracellular factors such as proteases and toxins from the periplasm. Part of the pseudopilus tip complex that is critical for the recognition and binding of secretion substrates. This chain is Type II secretion system protein H (outH), found in Dickeya chrysanthemi (Pectobacterium chrysanthemi).